The sequence spans 223 residues: MKFAVLVFPGSNCDRDMFNAAIKSGVEAEYVDYRETSLSGFDGVLIPGGFSFGDYLRSGAMASVAPIISEVKRLAAEGKPVLGVCNGFQILTEIGLLPGALLHNDSHLFISRNEELEIVNNQTAFTNLYEQGEKVIYPVAHGEGHYYCTDEIYQQLKANNQIILKYVNNPNGSYDDIAGIVNKKGNVCGMMPHPERALETLLGTDSGVKLFEAMVKSWREQHV.

The Glutamine amidotransferase type-1 domain occupies 3–223; it reads FAVLVFPGSN…MVKSWREQHV (221 aa). The Nucleophile role is filled by cysteine 85. Catalysis depends on residues histidine 193 and glutamate 195.

As to quaternary structure, part of the FGAM synthase complex composed of 1 PurL, 1 PurQ and 2 PurS subunits.

It localises to the cytoplasm. The enzyme catalyses N(2)-formyl-N(1)-(5-phospho-beta-D-ribosyl)glycinamide + L-glutamine + ATP + H2O = 2-formamido-N(1)-(5-O-phospho-beta-D-ribosyl)acetamidine + L-glutamate + ADP + phosphate + H(+). It catalyses the reaction L-glutamine + H2O = L-glutamate + NH4(+). The protein operates within purine metabolism; IMP biosynthesis via de novo pathway; 5-amino-1-(5-phospho-D-ribosyl)imidazole from N(2)-formyl-N(1)-(5-phospho-D-ribosyl)glycinamide: step 1/2. In terms of biological role, part of the phosphoribosylformylglycinamidine synthase complex involved in the purines biosynthetic pathway. Catalyzes the ATP-dependent conversion of formylglycinamide ribonucleotide (FGAR) and glutamine to yield formylglycinamidine ribonucleotide (FGAM) and glutamate. The FGAM synthase complex is composed of three subunits. PurQ produces an ammonia molecule by converting glutamine to glutamate. PurL transfers the ammonia molecule to FGAR to form FGAM in an ATP-dependent manner. PurS interacts with PurQ and PurL and is thought to assist in the transfer of the ammonia molecule from PurQ to PurL. This is Phosphoribosylformylglycinamidine synthase subunit PurQ from Staphylococcus aureus (strain MSSA476).